An 886-amino-acid polypeptide reads, in one-letter code: Alanine--tRNA ligase (886 aa).

Zn(2+)-binding residues include His-564, His-568, Cys-666, and His-670.

The protein belongs to the class-II aminoacyl-tRNA synthetase family. It depends on Zn(2+) as a cofactor.

It localises to the cytoplasm. The catalysed reaction is tRNA(Ala) + L-alanine + ATP = L-alanyl-tRNA(Ala) + AMP + diphosphate. Functionally, catalyzes the attachment of alanine to tRNA(Ala) in a two-step reaction: alanine is first activated by ATP to form Ala-AMP and then transferred to the acceptor end of tRNA(Ala). Also edits incorrectly charged Ser-tRNA(Ala) and Gly-tRNA(Ala) via its editing domain. The protein is Alanine--tRNA ligase of Prochlorococcus marinus (strain MIT 9301).